A 1032-amino-acid chain; its full sequence is Suppression of tumorigenicity 18 protein (1032 aa).

3 disordered regions span residues 29–76, 162–213, and 325–354; these read RAEE…TNDH, GRDK…LTYN, and RQPK…AKCP. Over residues 40-51 the composition is skewed to basic residues; it reads NKRKSLLMKPRH. A compositionally biased stretch (basic and acidic residues) spans 52–76; sequence YSPDMDCKENPDNRNEDDGLETNDH. 6 consecutive CCHHC-type zinc fingers follow at residues 344–387, 388–431, 700–743, 744–787, 792–835, and 845–888; these read PRPE…PLEI, LAMH…KLAM, RDLK…LKSL, MAAN…GIKM, EEKE…QKEN, and KLNK…IKKV. The Zn(2+) site is built by cysteine 353, cysteine 358, histidine 371, cysteine 377, cysteine 397, cysteine 402, histidine 415, cysteine 421, cysteine 709, cysteine 714, histidine 727, cysteine 733, cysteine 753, cysteine 758, histidine 771, cysteine 777, cysteine 801, cysteine 806, histidine 819, cysteine 825, cysteine 854, cysteine 859, histidine 872, and cysteine 878. The stretch at 905 to 974 forms a coiled coil; the sequence is IEGDEEIRHL…KELAGLSQAL (70 aa).

Belongs to the MYT1 family. In terms of tissue distribution, detected in brain.

The protein localises to the nucleus. Functionally, repressor that binds to DNA sequences containing a bipartite element consisting of a direct repeat of the sequence 5'-AAAGTTT-3' separated by 2-9 nucleotides. Represses basal transcription activity from target promoters. The protein is Suppression of tumorigenicity 18 protein (St18) of Rattus norvegicus (Rat).